The primary structure comprises 669 residues: Elongation factor G 2 (669 aa).

Residues Met1–Phe276 enclose the tr-type G domain. GTP is bound by residues Ala10–Thr17, Asp74–His78, and Asn128–Asp131.

The protein belongs to the TRAFAC class translation factor GTPase superfamily. Classic translation factor GTPase family. EF-G/EF-2 subfamily.

It localises to the cytoplasm. In terms of biological role, catalyzes the GTP-dependent ribosomal translocation step during translation elongation. During this step, the ribosome changes from the pre-translocational (PRE) to the post-translocational (POST) state as the newly formed A-site-bound peptidyl-tRNA and P-site-bound deacylated tRNA move to the P and E sites, respectively. Catalyzes the coordinated movement of the two tRNA molecules, the mRNA and conformational changes in the ribosome. The chain is Elongation factor G 2 (fusB) from Borreliella burgdorferi (strain ATCC 35210 / DSM 4680 / CIP 102532 / B31) (Borrelia burgdorferi).